The primary structure comprises 141 residues: Decarboxylase CPUR_05434 (141 aa).

The region spanning Glu26 to Thr121 is the EthD domain.

This sequence belongs to the tpcK family.

The catalysed reaction is atrochrysone carboxylate + H(+) = atrochrysone + CO2. Its function is as follows. Decarboxylase; part of the ergochrome gene cluster responsible for the typical purple-black color of the ergot sclerotia. The ergochrome gene cluster produces several ergot pigments including the yellow ergochrome secalonic acid and its derivatives, as well as the red anthraquinones endocrocin and clavorubin. The pathway begins with the synthesis of atrochrysone thioester by the polyketide synthase (PKS) CPUR_05437. The atrochrysone carboxyl ACP thioesterase CPUR_05436 then breaks the thioester bond and releases the atrochrysone carboxylic acid from CPUR_05437. The decarboxylase CPUR_05434 then catalyzes the concerted decarboxylation-elimination required to convert atochrysone carboxylic acid into emodin anthrone, which is further oxidized to emodin by the anthrone oxygenase CPUR_05435. Emodin is further modified to yield monodictyphenone via several steps involving CPUR_05427, CPUR_05428, CPUR_05429 and CPUR_05430. The short chain dehydrogenase/reductase CPUR_05418 then catalyzes the C-5 ketoreduction to give the xanthone skeleton of the monomeric units. Ergochromes formation requires further dimerization steps of different xanthone units, probably catalyzed by the cytochrome P450 monooxygenase CPUR_05419. CPUR_05425, CPUR_05426 and CPUR_05431 are unique to Claviceps, thus it is likely that they are involved in further modification of xanthone units or in their dimerization. The yellow ergochromes and the red anthraquinone pigments endocrocin and clavorubin are products from the same PKS derived precursors and the latter are likely shunt products in the pathway of xanthone biosynthesis. It is proposed that atrochrysone carboxylic acid released from the PKS CPUR_05437 can also be converted to endocrocin anthrone which is further oxidized into endocrocin by CPUR_05435. Endocrocin could be then modified to clavorubin, possibly by CPUR_05423 and CPUR_05431. Clavorubin is the principal anthraquinone metabolite produced by the cluster with a much higher yield compared to endocrocin. This is Decarboxylase CPUR_05434 from Claviceps purpurea (strain 20.1) (Ergot fungus).